We begin with the raw amino-acid sequence, 61 residues long: Metallothionein-2E (61 aa).

Met1 carries the post-translational modification N-acetylmethionine. A beta region spans residues 1 to 29; it reads MDPNCSCATRDSCACASSCKCKECKCTSC. The a divalent metal cation site is built by Cys5, Cys7, Cys13, Cys15, Cys19, Cys21, Cys24, Cys26, Cys29, Cys33, Cys34, Cys36, Cys37, Cys41, Cys44, Cys48, Cys50, Cys57, Cys59, and Cys60. Positions 30 to 61 are alpha; sequence KKSCCSCCPAGCTKCAQGCICKGALDKCSCCA.

Belongs to the metallothionein superfamily. Type 1 family. As to quaternary structure, monomer.

Metallothioneins have a high content of cysteine residues that bind various heavy metals; these proteins are transcriptionally regulated by both heavy metals and glucocorticoids. The protein is Metallothionein-2E of Oryctolagus cuniculus (Rabbit).